We begin with the raw amino-acid sequence, 185 residues long: Elongation factor P (185 aa).

It belongs to the elongation factor P family.

The protein localises to the cytoplasm. It functions in the pathway protein biosynthesis; polypeptide chain elongation. Involved in peptide bond synthesis. Stimulates efficient translation and peptide-bond synthesis on native or reconstituted 70S ribosomes in vitro. Probably functions indirectly by altering the affinity of the ribosome for aminoacyl-tRNA, thus increasing their reactivity as acceptors for peptidyl transferase. This is Elongation factor P from Caldanaerobacter subterraneus subsp. tengcongensis (strain DSM 15242 / JCM 11007 / NBRC 100824 / MB4) (Thermoanaerobacter tengcongensis).